The primary structure comprises 371 residues: Gamma-tocopherol methyltransferase, chloroplastic (371 aa).

The transit peptide at 1–65 (MAAAPVFFPS…NSNRIASRLQ (65 aa)) directs the protein to the chloroplast. The segment at 153–162 (IVDVGCGIGG) is SAM motif I. The interval 216 to 224 (GQFDLVWSM) is SAM motif II. An SAM motif III region spans residues 243–252 (VAAPGATIII).

Belongs to the class I-like SAM-binding methyltransferase superfamily. gTMT family. As to quaternary structure, homodimer.

It localises to the plastid. Its subcellular location is the chloroplast inner membrane. It catalyses the reaction picrinine + S-adenosyl-L-methionine = ervincine + S-adenosyl-L-homocysteine + H(+). It participates in alkaloid biosynthesis; vindoline biosynthesis. S-adenosyl-L-methionine-dependent N-methyltransferase involved in the biosynthesis of biologically active monoterpenoid indole alkaloids (MIAs) natural products including vindoline. Inactive with picrinine as substrate. The sequence is that of Gamma-tocopherol methyltransferase, chloroplastic from Catharanthus roseus (Madagascar periwinkle).